Here is a 663-residue protein sequence, read N- to C-terminus: DNA topoisomerase 1 (663 aa).

The region spanning 4–137 (SWLIITEKDN…TVKVDRVRYS (134 aa)) is the Toprim domain. Mg(2+)-binding residues include E10 and D106. The 404-residue stretch at 155–558 (DFNLANAALA…ESREMLLQIL (404 aa)) folds into the Topo IA-type catalytic domain. Residues 193–198 (SVGRVQ) form an interaction with DNA region. The O-(5'-phospho-DNA)-tyrosine intermediate role is filled by Y306. The segment at 583 to 610 (CPECGGELVVRQSKAGKRFIGCSNYPDC) adopts a C4-type 1 zinc-finger fold. Residues 629 to 653 (CKEHEIKEVKIRTKKGYWNLGCPYC) form a C4-type 2; atypical zinc finger.

It belongs to the type IA topoisomerase family. As to quaternary structure, monomer. The cofactor is Mg(2+).

It catalyses the reaction ATP-independent breakage of single-stranded DNA, followed by passage and rejoining.. Functionally, releases the supercoiling and torsional tension of DNA, which is introduced during the DNA replication and transcription, by transiently cleaving and rejoining one strand of the DNA duplex. Introduces a single-strand break via transesterification at a target site in duplex DNA. The scissile phosphodiester is attacked by the catalytic tyrosine of the enzyme, resulting in the formation of a DNA-(5'-phosphotyrosyl)-enzyme intermediate and the expulsion of a 3'-OH DNA strand. The free DNA strand then undergoes passage around the unbroken strand, thus removing DNA supercoils. Finally, in the religation step, the DNA 3'-OH attacks the covalent intermediate to expel the active-site tyrosine and restore the DNA phosphodiester backbone. The chain is DNA topoisomerase 1 from Archaeoglobus fulgidus (strain ATCC 49558 / DSM 4304 / JCM 9628 / NBRC 100126 / VC-16).